The following is a 321-amino-acid chain: Methionyl-tRNA formyltransferase (321 aa).

111–114 (SLLP) provides a ligand contact to (6S)-5,6,7,8-tetrahydrofolate.

It belongs to the Fmt family.

It carries out the reaction L-methionyl-tRNA(fMet) + (6R)-10-formyltetrahydrofolate = N-formyl-L-methionyl-tRNA(fMet) + (6S)-5,6,7,8-tetrahydrofolate + H(+). Functionally, attaches a formyl group to the free amino group of methionyl-tRNA(fMet). The formyl group appears to play a dual role in the initiator identity of N-formylmethionyl-tRNA by promoting its recognition by IF2 and preventing the misappropriation of this tRNA by the elongation apparatus. The polypeptide is Methionyl-tRNA formyltransferase (Bifidobacterium animalis subsp. lactis (strain AD011)).